Consider the following 343-residue polypeptide: Tetraacyldisaccharide 4'-kinase (343 aa).

An ATP-binding site is contributed by 51–58 (TVGGAGKT).

It belongs to the LpxK family.

It carries out the reaction a lipid A disaccharide + ATP = a lipid IVA + ADP + H(+). The protein operates within glycolipid biosynthesis; lipid IV(A) biosynthesis; lipid IV(A) from (3R)-3-hydroxytetradecanoyl-[acyl-carrier-protein] and UDP-N-acetyl-alpha-D-glucosamine: step 6/6. Functionally, transfers the gamma-phosphate of ATP to the 4'-position of a tetraacyldisaccharide 1-phosphate intermediate (termed DS-1-P) to form tetraacyldisaccharide 1,4'-bis-phosphate (lipid IVA). The polypeptide is Tetraacyldisaccharide 4'-kinase (Xanthobacter autotrophicus (strain ATCC BAA-1158 / Py2)).